The following is a 344-amino-acid chain: Thioredoxin domain-containing protein 15 (344 aa).

The first 20 residues, 1 to 20 (MQLLCWWQVLLWVLGLPAHG), serve as a signal peptide directing secretion. Residues 21-305 (LEVAEDSGHP…GPLPSTLIKT (285 aa)) lie on the Extracellular side of the membrane. Disordered regions lie at residues 55–119 (DHRD…FGLQ) and 136–156 (GVTE…SLKS). The span at 88–97 (EDQRSPEAHD) shows a compositional bias: basic and acidic residues. The Thioredoxin domain occupies 163–280 (ERNVTGLENF…LKIFIFNQTG (118 aa)). N-linked (GlcNAc...) asparagine glycosylation is found at N171, N178, N190, and N277. Residues 306–326 (VDWLLVFSLFFLISFIMYATI) traverse the membrane as a helical segment. Over 327-344 (RTESIRWLIPGQEQEHAE) the chain is Cytoplasmic.

The protein resides in the cell projection. Its subcellular location is the cilium membrane. Acts as a positive regulator of ciliary hedgehog signaling. Required for cilia biogenesis. This chain is Thioredoxin domain-containing protein 15 (Txndc15), found in Mus musculus (Mouse).